The primary structure comprises 217 residues: Elongation factor Ts (217 aa).

The tract at residues 82 to 85 is involved in Mg(2+) ion dislocation from EF-Tu; that stretch reads TDFV.

Belongs to the EF-Ts family.

The protein resides in the cytoplasm. Associates with the EF-Tu.GDP complex and induces the exchange of GDP to GTP. It remains bound to the aminoacyl-tRNA.EF-Tu.GTP complex up to the GTP hydrolysis stage on the ribosome. This chain is Elongation factor Ts, found in Desulfitobacterium hafniense (strain DSM 10664 / DCB-2).